We begin with the raw amino-acid sequence, 219 residues long: Ribosomal RNA small subunit methyltransferase G (219 aa).

Residues glycine 78, phenylalanine 83, 129–130, and arginine 146 each bind S-adenosyl-L-methionine; that span reads GE.

The protein belongs to the methyltransferase superfamily. RNA methyltransferase RsmG family.

It is found in the cytoplasm. It carries out the reaction guanosine(527) in 16S rRNA + S-adenosyl-L-methionine = N(7)-methylguanosine(527) in 16S rRNA + S-adenosyl-L-homocysteine. Specifically methylates the N7 position of guanine in position 527 of 16S rRNA. This Geotalea uraniireducens (strain Rf4) (Geobacter uraniireducens) protein is Ribosomal RNA small subunit methyltransferase G.